Consider the following 186-residue polypeptide: dCTP deaminase, dUMP-forming (186 aa).

DCTP is bound by residues 101 to 106 (RSSLGR), Asp-119, 127 to 129 (TLE), Gln-148, Tyr-162, and Gln-171. Glu-129 functions as the Proton donor/acceptor in the catalytic mechanism.

It belongs to the dCTP deaminase family. Homotrimer.

It catalyses the reaction dCTP + 2 H2O = dUMP + NH4(+) + diphosphate. The protein operates within pyrimidine metabolism; dUMP biosynthesis; dUMP from dCTP: step 1/1. In terms of biological role, bifunctional enzyme that catalyzes both the deamination of dCTP to dUTP and the hydrolysis of dUTP to dUMP without releasing the toxic dUTP intermediate. This is dCTP deaminase, dUMP-forming from Coprothermobacter proteolyticus (strain ATCC 35245 / DSM 5265 / OCM 4 / BT).